The following is a 245-amino-acid chain: MAKSKNHTTHNQSRKWHRNGIKKPRSQRYESLKGVDPKFLRNMRFAKKHNKKGLKKMQANNAKAMAARAEAIKALVKPKEVKPTIPKGVSRKLHRLAYIAHPKLGRRARARIARGLRLSRPQTKAKAKTEPQIKGKVKAQIKAQAQAQIKSKGKGKAQAETKPKAQAETKPKAQAQAKPKAQAQGKPKAQAQGKPKAQAQAKPKAQAQAKPKAQAQTKPKAQATPAAPVPAQAPPKGAQPPAKAP.

Residues 1–26 (MAKSKNHTTHNQSRKWHRNGIKKPRS) show a composition bias toward basic residues. Disordered stretches follow at residues 1 to 33 (MAKS…ESLK) and 114 to 245 (RGLR…AKAP). Lysine 5 is modified (N6-methyllysine). Serine 31 bears the Phosphoserine mark. Lysine 33 is subject to N6-acetyllysine. Positions 134-150 (KGKVKAQIKAQAQAQIK) are enriched in low complexity. Residues 157 to 171 (AQAETKPKAQAETKP) are compositionally biased toward basic and acidic residues. 2 stretches are compositionally biased toward low complexity: residues 172-226 (KAQA…ATPA) and 234-245 (PPKGAQPPAKAP).

It belongs to the eukaryotic ribosomal protein eL29 family. Component of the large ribosomal subunit.

The protein resides in the cytoplasm. Functionally, component of the large ribosomal subunit. The ribosome is a large ribonucleoprotein complex responsible for the synthesis of proteins in the cell. The polypeptide is Large ribosomal subunit protein eL29 (RPL29) (Oryctolagus cuniculus (Rabbit)).